Here is a 367-residue protein sequence, read N- to C-terminus: 2-aminoethylphosphonate--pyruvate transaminase (367 aa).

Lys-194 is subject to N6-(pyridoxal phosphate)lysine.

The protein belongs to the class-V pyridoxal-phosphate-dependent aminotransferase family. PhnW subfamily. In terms of assembly, homodimer. Requires pyridoxal 5'-phosphate as cofactor.

It catalyses the reaction (2-aminoethyl)phosphonate + pyruvate = phosphonoacetaldehyde + L-alanine. Its function is as follows. Involved in phosphonate degradation. The protein is 2-aminoethylphosphonate--pyruvate transaminase of Klebsiella pneumoniae subsp. pneumoniae (strain ATCC 700721 / MGH 78578).